The primary structure comprises 237 residues: 1-(5-phosphoribosyl)-5-[(5-phosphoribosylamino)methylideneamino] imidazole-4-carboxamide isomerase (237 aa).

Aspartate 8 functions as the Proton acceptor in the catalytic mechanism. Catalysis depends on aspartate 129, which acts as the Proton donor.

The protein belongs to the HisA/HisF family.

Its subcellular location is the cytoplasm. The enzyme catalyses 1-(5-phospho-beta-D-ribosyl)-5-[(5-phospho-beta-D-ribosylamino)methylideneamino]imidazole-4-carboxamide = 5-[(5-phospho-1-deoxy-D-ribulos-1-ylimino)methylamino]-1-(5-phospho-beta-D-ribosyl)imidazole-4-carboxamide. It functions in the pathway amino-acid biosynthesis; L-histidine biosynthesis; L-histidine from 5-phospho-alpha-D-ribose 1-diphosphate: step 4/9. The polypeptide is 1-(5-phosphoribosyl)-5-[(5-phosphoribosylamino)methylideneamino] imidazole-4-carboxamide isomerase (Acetivibrio thermocellus (strain ATCC 27405 / DSM 1237 / JCM 9322 / NBRC 103400 / NCIMB 10682 / NRRL B-4536 / VPI 7372) (Clostridium thermocellum)).